The sequence spans 174 residues: NADH-ubiquinone oxidoreductase chain 6 (174 aa).

6 helical membrane-spanning segments follow: residues 1 to 21 (MTYV…GFSS), 24 to 44 (SPIY…TIIL), 47 to 67 (GGGY…MVVF), 86 to 106 (VEVL…VLWV), 111 to 131 (GVVV…EGEG), and 151 to 171 (WLVV…IEIA).

It belongs to the complex I subunit 6 family. As to quaternary structure, core subunit of respiratory chain NADH dehydrogenase (Complex I) which is composed of 45 different subunits.

It is found in the mitochondrion inner membrane. It carries out the reaction a ubiquinone + NADH + 5 H(+)(in) = a ubiquinol + NAD(+) + 4 H(+)(out). In terms of biological role, core subunit of the mitochondrial membrane respiratory chain NADH dehydrogenase (Complex I) which catalyzes electron transfer from NADH through the respiratory chain, using ubiquinone as an electron acceptor. Essential for the catalytic activity and assembly of complex I. The polypeptide is NADH-ubiquinone oxidoreductase chain 6 (MT-ND6) (Pan paniscus (Pygmy chimpanzee)).